Consider the following 356-residue polypeptide: Protein RecA (356 aa).

Position 77–84 (77–84 (GPESSGKT)) interacts with ATP.

The protein belongs to the RecA family.

Its subcellular location is the cytoplasm. In terms of biological role, can catalyze the hydrolysis of ATP in the presence of single-stranded DNA, the ATP-dependent uptake of single-stranded DNA by duplex DNA, and the ATP-dependent hybridization of homologous single-stranded DNAs. It interacts with LexA causing its activation and leading to its autocatalytic cleavage. The protein is Protein RecA of Caulobacter sp. (strain K31).